The chain runs to 591 residues: Thiamine transporter thi9 (591 aa).

Over residues 1-22 (MPSSQISHQDPELGQTSSGSSS) the composition is skewed to polar residues. The interval 1 to 42 (MPSSQISHQDPELGQTSSGSSSIKEKAEPQLYAGPIDPARRP) is disordered. Helical transmembrane passes span 98-118 (LTFS…AMLV), 342-362 (IFYS…LYLF), 397-417 (VVMN…SVLA), 450-470 (ITVI…SAVA), and 545-565 (YAVV…IVIP). At Ser-585 the chain carries Phosphoserine.

This sequence belongs to the amino acid-polyamine-organocation (APC) superfamily.

It is found in the endoplasmic reticulum membrane. Its subcellular location is the cell membrane. In terms of biological role, thiamine transporter involved in the cellular uptake of thiamine. Pyrithiamine, oxythiamine, amprolium, and the thiazole part of thiamine have been shown to be also substrates of thi9. In Schizosaccharomyces pombe (strain 972 / ATCC 24843) (Fission yeast), this protein is Thiamine transporter thi9 (thi9).